We begin with the raw amino-acid sequence, 464 residues long: ATP synthase subunit beta 2 (464 aa).

ATP is bound at residue 147–154 (GGAGVGKT).

This sequence belongs to the ATPase alpha/beta chains family. F-type ATPases have 2 components, CF(1) - the catalytic core - and CF(0) - the membrane proton channel. CF(1) has five subunits: alpha(3), beta(3), gamma(1), delta(1), epsilon(1). CF(0) has four main subunits: a(1), b(1), b'(1) and c(9-12).

The protein resides in the cell inner membrane. It carries out the reaction ATP + H2O + 4 H(+)(in) = ADP + phosphate + 5 H(+)(out). In terms of biological role, produces ATP from ADP in the presence of a proton gradient across the membrane. The catalytic sites are hosted primarily by the beta subunits. This is ATP synthase subunit beta 2 from Cereibacter sphaeroides (strain ATCC 17029 / ATH 2.4.9) (Rhodobacter sphaeroides).